The chain runs to 247 residues: Adenosylcobinamide-GDP ribazoletransferase (247 aa).

6 helical membrane-spanning segments follow: residues 31 to 51 (ILFY…VTCI), 55 to 75 (LPAL…TGGL), 109 to 129 (IGVL…YVLI), 135 to 155 (LFLI…FLTT), 183 to 203 (VLLL…GFLI), and 227 to 247 (AIEI…FYLV).

It belongs to the CobS family. Mg(2+) serves as cofactor.

It localises to the cell inner membrane. It catalyses the reaction alpha-ribazole + adenosylcob(III)inamide-GDP = adenosylcob(III)alamin + GMP + H(+). The enzyme catalyses alpha-ribazole 5'-phosphate + adenosylcob(III)inamide-GDP = adenosylcob(III)alamin 5'-phosphate + GMP + H(+). The protein operates within cofactor biosynthesis; adenosylcobalamin biosynthesis; adenosylcobalamin from cob(II)yrinate a,c-diamide: step 7/7. Functionally, joins adenosylcobinamide-GDP and alpha-ribazole to generate adenosylcobalamin (Ado-cobalamin). Also synthesizes adenosylcobalamin 5'-phosphate from adenosylcobinamide-GDP and alpha-ribazole 5'-phosphate. This is Adenosylcobinamide-GDP ribazoletransferase from Acinetobacter baumannii (strain ATCC 17978 / DSM 105126 / CIP 53.77 / LMG 1025 / NCDC KC755 / 5377).